A 60-amino-acid chain; its full sequence is MDHRLLEIVACPVCHGKLYYNKEQQELICKPDGLAYPVQDGIPVLLEVEARALTLEESHP.

The protein belongs to the UPF0434 family.

In Erwinia tasmaniensis (strain DSM 17950 / CFBP 7177 / CIP 109463 / NCPPB 4357 / Et1/99), this protein is UPF0434 protein ETA_21370.